Here is a 266-residue protein sequence, read N- to C-terminus: Protein STAY-GREEN homolog, chloroplastic (266 aa).

The N-terminal 50 residues, 1–50, are a transit peptide targeting the chloroplast; it reads MGTLTASLVAPSKLNPEKHSSLFVYKTRRKSHKNQSIVPVARLFGPAIFE.

The protein belongs to the staygreen family.

It is found in the plastid. Its subcellular location is the chloroplast. In terms of biological role, required to trigger chlorophyll degradation during leaf senescence and fruit ripening. The protein is Protein STAY-GREEN homolog, chloroplastic of Capsicum annuum (Capsicum pepper).